The following is a 221-amino-acid chain: uncharacterized protein (221 aa).

4 consecutive transmembrane segments (helical) span residues 30–50 (FGIFLALSIEFIPAEVVLPLA), 62–82 (AGVVLAGSLGGVAGPLTLYWI), 144–164 (VWVFSLYTFIAMLPITFVYVY), and 179–199 (ILDQYMLPIGIAILALFLLYL).

The protein belongs to the DedA family.

It localises to the cell membrane. This is an uncharacterized protein from Bacillus subtilis (strain 168).